The sequence spans 233 residues: Purine nucleoside phosphorylase DeoD-type (233 aa).

H4 provides a ligand contact to a purine D-ribonucleoside. Residues G20, R24, R43, and 87–90 each bind phosphate; that span reads RIGT. A purine D-ribonucleoside contacts are provided by residues 179 to 181 and 203 to 204; these read EME and SD. D204 serves as the catalytic Proton donor.

The protein belongs to the PNP/UDP phosphorylase family. Homohexamer; trimer of homodimers.

The catalysed reaction is a purine D-ribonucleoside + phosphate = a purine nucleobase + alpha-D-ribose 1-phosphate. It catalyses the reaction a purine 2'-deoxy-D-ribonucleoside + phosphate = a purine nucleobase + 2-deoxy-alpha-D-ribose 1-phosphate. In terms of biological role, catalyzes the reversible phosphorolytic breakdown of the N-glycosidic bond in the beta-(deoxy)ribonucleoside molecules, with the formation of the corresponding free purine bases and pentose-1-phosphate. This Helicobacter pylori (strain P12) protein is Purine nucleoside phosphorylase DeoD-type.